A 169-amino-acid chain; its full sequence is Centrin-1 (169 aa).

The tract at residues Met1–Glu21 is essential for homooligomerization. Residues Met1–Glu25 form a disordered region. 4 consecutive EF-hand domains span residues Glu25–Glu60, Pro61–Glu96, Asp98–Asn133, and Leu134–Phe169. Asp38, Asp40, Ser42, Cys44, Glu49, Asp74, Asp76, Thr78, Ser80, and Glu85 together coordinate Ca(2+).

This sequence belongs to the centrin family. As to quaternary structure, monomer. Homooligomerizes in a Ca(2+)-dependent manner. Interaction via the C-terminus with other proteins disrupts and/or prevents homooligomerization. Interacts with SFI1.

The protein resides in the cytoplasm. It localises to the cytoskeleton. Its subcellular location is the microtubule organizing center. The protein localises to the centrosome. In terms of biological role, acts as a calcium sensor. Part of the centrosome outer core complex. In Toxoplasma gondii (strain ATCC 50611 / Me49), this protein is Centrin-1.